Reading from the N-terminus, the 657-residue chain is Receptor-type tyrosine-protein phosphatase R (657 aa).

A signal peptide spans 1-21 (MRRAVCFPALCLLLNLHAAGC). Over 22–227 (FSGNNDHFLA…EADKIWSKEG (206 aa)) the chain is Extracellular. Serine 23 carries O-linked (Xyl...) (chondroitin sulfate) serine glycosylation. N-linked (GlcNAc...) asparagine glycosylation occurs at asparagine 129. Residues 228-248 (FYAVVIFLSIFVIIVTCLMIL) traverse the membrane as a helical segment. Topologically, residues 249–657 (YRLKERFQLS…ESRLSAETVQ (409 aa)) are cytoplasmic. Serine 272 carries the post-translational modification Phosphoserine. Phosphoserine; by PKA is present on serine 339. One can recognise a Tyrosine-protein phosphatase domain in the interval 393 to 647 (LQSEFMEIPM…EFVHHALCLY (255 aa)). Substrate-binding positions include aspartate 554, 588–594 (CSAGIGR), and glutamine 632. Cysteine 588 (phosphocysteine intermediate) is an active-site residue.

It belongs to the protein-tyrosine phosphatase family. Receptor class 7 subfamily. Interacts with MAPKs. As to expression, detected in cerebrospinal fluid (at protein level). Expressed in brain, placenta, small intestine, stomach, uterus and weakly in the prostate. Isoform alpha has been observed only in the brain. Isoform gamma is expressed in brain, placenta and uterus. Isoform delta is expressed in brain, kidney, placenta, prostate, small intestine and uterus.

It is found in the secreted. The protein resides in the cell membrane. It localises to the cytoplasm. Its subcellular location is the perinuclear region. The catalysed reaction is O-phospho-L-tyrosyl-[protein] + H2O = L-tyrosyl-[protein] + phosphate. Its function is as follows. Sequesters mitogen-activated protein kinases (MAPKs) such as MAPK1, MAPK3 and MAPK14 in the cytoplasm in an inactive form. The MAPKs bind to a dephosphorylated kinase interacting motif, phosphorylation of which by the protein kinase A complex releases the MAPKs for activation and translocation into the nucleus. The protein is Receptor-type tyrosine-protein phosphatase R (PTPRR) of Homo sapiens (Human).